The primary structure comprises 256 residues: Small ribosomal subunit protein eS1 (256 aa).

The residue at position 2 (Ala2) is an N-acetylalanine; partial.

Belongs to the eukaryotic ribosomal protein eS1 family. In terms of assembly, component of the small ribosomal subunit. Mature ribosomes consist of a small (40S) and a large (60S) subunit. The 40S subunit contains about 33 different proteins and 1 molecule of RNA (18S). The 60S subunit contains about 49 different proteins and 3 molecules of RNA (25S, 5.8S and 5S).

The protein localises to the cytoplasm. This Fusarium vanettenii (strain ATCC MYA-4622 / CBS 123669 / FGSC 9596 / NRRL 45880 / 77-13-4) (Fusarium solani subsp. pisi) protein is Small ribosomal subunit protein eS1.